The primary structure comprises 519 residues: UPF0053 protein bbp_300 (519 aa).

7 consecutive transmembrane segments (helical) span residues 13 to 35, 48 to 70, 80 to 102, 123 to 145, 150 to 172, 185 to 207, and 212 to 231; these read LLTL…AILS, LIGL…WMVT, YFSF…FKAT, AGFW…DAII, TINN…LIAS, VVVL…ALGF, and GYLY…NQIA. CBS domains lie at 311 to 373 and 374 to 434; these read MTPR…IIDF and SSTT…DADE.

It belongs to the UPF0053 family.

Its subcellular location is the cell membrane. This Buchnera aphidicola subsp. Baizongia pistaciae (strain Bp) protein is UPF0053 protein bbp_300.